Here is a 426-residue protein sequence, read N- to C-terminus: O-methyltransferase pyvH (426 aa).

S-adenosyl-L-methionine contacts are provided by residues 258–259 (GG), D281, 308–309 (DF), and R323. H327 serves as the catalytic Proton acceptor.

Belongs to the class I-like SAM-binding methyltransferase superfamily. Cation-independent O-methyltransferase family.

Its pathway is secondary metabolite biosynthesis. O-methyltransferase; part of the gene cluster that mediates the biosynthesis of pyranoviolin A, a pyranonigrin analog with a C-3 methoxy group. Initially, the PKS portion of pyvA synthesizes C-10 carbon chain from 5 molecules of malonyl-CoA, which is then condensed with the thiolation (T) domain-bound glycine activated by the adenylation (A) domain. The subsequent chain release by Dieckmann condensation (DKC) could be catalyzed by the TE domain present at the C-terminus of pyvA and/or the alpha/beta hydrolase pyvD, installing the tetramic acid moiety. The FAD-dependent monooxygenase pyvC next epoxidizes one of the olefins of the polyketide part, and the epoxide ring-opening induces the dihydro-gamma-pyrone ring formation. The cytochrome P450 monooxygeanse pyvB would be responsible for the 2 consecutive reactions, in which the dihydro-gamma-pyrone is oxidized to gamma-pyrone and C-7 is hydroxylated to yield pyranonigrin F. Finally, the O-methyltransferase pyvH methylates the C-3 hydroxy group to complete the biosynthesis. In Aspergillus violaceofuscus (strain CBS 115571), this protein is O-methyltransferase pyvH.